A 60-amino-acid polypeptide reads, in one-letter code: Ferredoxin-1 (60 aa).

4Fe-4S ferredoxin-type domains lie at 2-27 (LYITEECTYCGACEPECPVTAISAGD) and 28-60 (DIYVIDANTCNECAGLDEQACVAVCPAECIVQG). Residues Cys8, Cys11, Cys14, Cys18, Cys37, Cys40, Cys48, and Cys52 each coordinate [4Fe-4S] cluster.

[4Fe-4S] cluster serves as cofactor.

Functionally, ferredoxins are iron-sulfur proteins that transfer electrons in a wide variety of metabolic reactions. The polypeptide is Ferredoxin-1 (Chlorobium limicola).